A 137-amino-acid chain; its full sequence is Peptide methionine sulfoxide reductase MsrB (137 aa).

Positions Pro-7–Asp-129 constitute a MsrB domain. Residues Cys-46, Cys-49, Cys-95, and Cys-98 each contribute to the Zn(2+) site. The active-site Nucleophile is the Cys-118.

It belongs to the MsrB Met sulfoxide reductase family. The cofactor is Zn(2+).

The enzyme catalyses L-methionyl-[protein] + [thioredoxin]-disulfide + H2O = L-methionyl-(R)-S-oxide-[protein] + [thioredoxin]-dithiol. The polypeptide is Peptide methionine sulfoxide reductase MsrB (Yersinia pseudotuberculosis serotype O:1b (strain IP 31758)).